The chain runs to 64 residues: Putative antitoxin AF_1074 (64 aa).

The protein belongs to the UPF0165 family.

Its function is as follows. Possibly the antitoxin component of a type II toxin-antitoxin (TA) system. This Archaeoglobus fulgidus (strain ATCC 49558 / DSM 4304 / JCM 9628 / NBRC 100126 / VC-16) protein is Putative antitoxin AF_1074.